We begin with the raw amino-acid sequence, 93 residues long: Large ribosomal subunit protein uL23cz/uL23cy (93 aa).

The protein belongs to the universal ribosomal protein uL23 family. Part of the 50S ribosomal subunit.

Its subcellular location is the plastid. It is found in the chloroplast. In terms of biological role, binds to 23S rRNA. This Helianthus annuus (Common sunflower) protein is Large ribosomal subunit protein uL23cz/uL23cy (rpl23-A).